The following is a 246-amino-acid chain: MSYVEQYYESISRLLRQTVDEGEEVLGKAADIMVHAIKEGKSLYLFGASHAGIIAEDAFYRAGGLALFNPIFSPALMLNVEPITLTSKLERLEGYGTILLESKPVKQGDVLFIHSVSGRNPVAIDMAIAAKQKGMTVISLTNVSYSKSVESRHSSGKRLFEVSDLVMDNHGEPGDAAVSVKSLSQKVAPTSTIVGSFIIHSIVLKMIEQLEEAGREVPVFRSANLDGGDAYNEAMMERHKHQIHYM.

One can recognise an SIS domain in the interval 33 to 212 (MVHAIKEGKS…VLKMIEQLEE (180 aa)).

The protein belongs to the UPF0309 family.

The polypeptide is UPF0309 protein ABC0887 (Shouchella clausii (strain KSM-K16) (Alkalihalobacillus clausii)).